A 192-amino-acid chain; its full sequence is Thymidylate kinase (192 aa).

Residue 7 to 14 (GIDCVGKS) coordinates ATP.

It belongs to the thymidylate kinase family.

It catalyses the reaction dTMP + ATP = dTDP + ADP. Its function is as follows. Phosphorylation of dTMP to form dTDP in both de novo and salvage pathways of dTTP synthesis. This is Thymidylate kinase (tmk) from Campylobacter jejuni subsp. jejuni serotype O:2 (strain ATCC 700819 / NCTC 11168).